The chain runs to 1108 residues: Retinal guanylyl cyclase 1 (1108 aa).

The first 54 residues, 1-54 (MSAWLLPAGGLPGAGFCVPARQSPSSFSRVLRWPRPGLPGLLLLLLLPSPSALS), serve as a signal peptide directing secretion. Over 55 to 465 (AVFKVGVLGP…PDVICNGGVE (411 aa)) the chain is Extracellular. A disulfide bridge links C108 with C136. N300 carries an N-linked (GlcNAc...) asparagine glycan. A helical membrane pass occupies residues 466–490 (PGLVFVGFLLVIGMGLTGAFLAHYL). The Protein kinase domain maps to 491–811 (RHRLLHMQMA…DLTFDLFKSI (321 aa)). Over 491–1108 (RHRLLHMQMA…KARPGQFTGK (618 aa)) the chain is Cytoplasmic. A Guanylate cyclase domain is found at 883–1013 (TLYFSDIVGF…DTVNTASRME (131 aa)). The tract at residues 1069–1108 (IPKPPDLQPGASNHGISLQEIPPERRKKLEKARPGQFTGK) is disordered.

It belongs to the adenylyl cyclase class-4/guanylyl cyclase family. As to quaternary structure, homodimer; requires homodimerization for guanylyl cyclase activity. Interacts (via C-terminus) with RD3 (via C-terminus); promotes the exit of GUCY2E from the endoplasmic reticulum and its trafficking to the photoreceptor outer segments. Interaction with RD3 negatively regulates GUCY2E guanylate cyclase activity. There are 9 conserved cysteine residues in sensory guanylate cyclases, 6 in the extracellular domain, which may be involved in intra- or interchain disulfide bonds.

It localises to the photoreceptor outer segment membrane. The protein resides in the endoplasmic reticulum membrane. It catalyses the reaction GTP = 3',5'-cyclic GMP + diphosphate. With respect to regulation, activated by GUCA1A when free calcium ions concentration is low, and inhibited by GUCA1A when free calcium ions concentration is high. Negatively regulated by RD3; RD3 inhibits the basal and GUCA1A-stimulated guanylate cyclase activity. Functionally, catalyzes the synthesis of cyclic GMP (cGMP) in rods and cones of photoreceptors. Plays an essential role in phototransduction, by mediating cGMP replenishment. May also participate in the trafficking of membrane-asociated proteins to the photoreceptor outer segment membrane. The protein is Retinal guanylyl cyclase 1 (Gucy2e) of Mus musculus (Mouse).